The chain runs to 182 residues: Large ribosomal subunit protein uL5 (182 aa).

Belongs to the universal ribosomal protein uL5 family. In terms of assembly, part of the 50S ribosomal subunit; part of the 5S rRNA/L5/L18/L25 subcomplex. Contacts the 5S rRNA and the P site tRNA. Forms a bridge to the 30S subunit in the 70S ribosome.

This is one of the proteins that bind and probably mediate the attachment of the 5S RNA into the large ribosomal subunit, where it forms part of the central protuberance. In the 70S ribosome it contacts protein S13 of the 30S subunit (bridge B1b), connecting the 2 subunits; this bridge is implicated in subunit movement. Contacts the P site tRNA; the 5S rRNA and some of its associated proteins might help stabilize positioning of ribosome-bound tRNAs. This Borrelia hermsii (strain HS1 / DAH) protein is Large ribosomal subunit protein uL5.